The following is a 241-amino-acid chain: ATP synthase subunit a (241 aa).

A run of 5 helical transmembrane segments spans residues 30 to 50, 91 to 111, 128 to 148, 193 to 213, and 214 to 234; these read GQVF…VVVG, FIGT…LIPW, INTT…AGLS, LVVA…VMFL, and GLFT…YYIG.

Belongs to the ATPase A chain family. As to quaternary structure, F-type ATPases have 2 components, CF(1) - the catalytic core - and CF(0) - the membrane proton channel. CF(1) has five subunits: alpha(3), beta(3), gamma(1), delta(1), epsilon(1). CF(0) has four main subunits: a, b, b' and c.

The protein resides in the cellular thylakoid membrane. In terms of biological role, key component of the proton channel; it plays a direct role in the translocation of protons across the membrane. The sequence is that of ATP synthase subunit a from Prochlorococcus marinus (strain SARG / CCMP1375 / SS120).